Consider the following 206-residue polypeptide: Outer-membrane lipoprotein carrier protein (206 aa).

The N-terminal stretch at 1–21 (MTRLLFVLVLSVCLLPVPVKA) is a signal peptide.

Belongs to the LolA family. As to quaternary structure, monomer.

It is found in the periplasm. Its function is as follows. Participates in the translocation of lipoproteins from the inner membrane to the outer membrane. Only forms a complex with a lipoprotein if the residue after the N-terminal Cys is not an aspartate (The Asp acts as a targeting signal to indicate that the lipoprotein should stay in the inner membrane). This chain is Outer-membrane lipoprotein carrier protein, found in Nitrosomonas europaea (strain ATCC 19718 / CIP 103999 / KCTC 2705 / NBRC 14298).